A 56-amino-acid polypeptide reads, in one-letter code: Defensin-1 (56 aa).

Positions 1–24 are cleaved as a signal peptide; that stretch reads MKAIVVLLILALILCLYAMTTVEG. 3 cysteine pairs are disulfide-bonded: Cys-26–Cys-45, Cys-31–Cys-53, and Cys-35–Cys-55.

The protein resides in the secreted. Antibacterial protein involved in the immune response to septic injury. When combined with 14.026 kDa and 14.059 kDa hemolymph antimicrobial peptides, it has a strong cooperative activity against the Gram-positive bacteria B.subtilis and S.aureus, and against the Gram-negative bacteria E.coli DH5-alpha and K.pneumoniae ATCC 138833. Does not show detectable antibacterial activity when present alone. Has no hemolytic activity in human erythrocytes. In Centruroides limpidus (Mexican scorpion), this protein is Defensin-1.